A 218-amino-acid chain; its full sequence is Copper acquisition factor BIM1 (218 aa).

A signal peptide spans 1 to 19 (MFALKFILITSFIASTALA). Cu(2+)-binding residues include His-20 and His-65. Disulfide bonds link Cys-40–Cys-144 and Cys-110–Cys-161. 3 N-linked (GlcNAc...) asparagine glycosylation sites follow: Asn-87, Asn-91, and Asn-124. Asp-138 lines the Cu(2+) pocket. N-linked (GlcNAc...) asparagine glycans are attached at residues Asn-158 and Asn-170. The interval 160–194 (TCTDDASRTSNASSTSSGSATATSAAATSSSSGTS) is disordered. A compositionally biased stretch (low complexity) spans 167-194 (RTSNASSTSSGSATATSAAATSSSSGTS). Ser-190 carries GPI-anchor amidated serine lipidation. Positions 191–218 (SGTSGAIKEVVGLGALSLALGIAGLIIL) are cleaved as a propeptide — removed in mature form.

The protein belongs to the X325 family. The cofactor is Cu(2+).

Its subcellular location is the cell membrane. Lytic polysaccharide monooxygenase-like protein that has diverged to biological functions other than polysaccharide degradation since it does not perform oxidative cleavage of polysaccharides. Cell surface-bound protein that functions in the copper-accumulation pathway shared by the CUF1-dependent copper transporter CTR1. Involved in maintaining cell wall integrity during copper deficiency. Binds Cu(2+) with an estimated 1:1 stoichiometry and might serve as an extracellular copper ligand. FRE4 and FRE7 metalloreductases probably function together with CTR1 and BIM1 to liberate the Cu(2+) bound to the BIM1 copper-binding site for subsequent import of Cu(+) into the cell by CTR1, via the reduction of BIM1-bound Cu(2+) to Cu(+) to reduce binding affinity for BIM1 but increase affinity for CTR1. Facilitates copper acquisition in the brain of mammalian hosts and acts as a copper-dependent virulence trait in fungal meningitis. While BIM1 plays a critical role in cryptococcal meningitis, at least in part through its role in copper acquisition, it could play additional roles during copper limitation or as a means to invade and colonize host tissues in the brain, by compromising host carbohydrate integrity via its lytic polysaccharide monooxygenase (LPMO) activity, which has still to be determined. The protein is Copper acquisition factor BIM1 of Cryptococcus neoformans var. neoformans serotype D (strain JEC21 / ATCC MYA-565) (Filobasidiella neoformans).